We begin with the raw amino-acid sequence, 483 residues long: Regulatory protein ViaA (483 aa).

It belongs to the ViaA family. In terms of assembly, homodimer. Interacts with RavA.

Its subcellular location is the cytoplasm. Functionally, component of the RavA-ViaA chaperone complex, which may act on the membrane to optimize the function of some of the respiratory chains. ViaA stimulates the ATPase activity of RavA. This Escherichia coli O1:K1 / APEC protein is Regulatory protein ViaA.